The following is a 302-amino-acid chain: UTP--glucose-1-phosphate uridylyltransferase (302 aa).

It belongs to the UDPGP type 2 family. As to quaternary structure, homotetramer or homopentamer. Mg(2+) is required as a cofactor.

The catalysed reaction is alpha-D-glucose 1-phosphate + UTP + H(+) = UDP-alpha-D-glucose + diphosphate. In terms of biological role, may play a role in stationary phase survival. This is UTP--glucose-1-phosphate uridylyltransferase (galU) from Escherichia coli O157:H7.